The chain runs to 122 residues: Large ribosomal subunit protein uL14 (122 aa).

It belongs to the universal ribosomal protein uL14 family. Part of the 50S ribosomal subunit. Forms a cluster with proteins L3 and L19. In the 70S ribosome, L14 and L19 interact and together make contacts with the 16S rRNA in bridges B5 and B8.

Functionally, binds to 23S rRNA. Forms part of two intersubunit bridges in the 70S ribosome. The protein is Large ribosomal subunit protein uL14 of Saccharopolyspora erythraea (strain ATCC 11635 / DSM 40517 / JCM 4748 / NBRC 13426 / NCIMB 8594 / NRRL 2338).